The primary structure comprises 336 residues: 3-isopropylmalate dehydrogenase (336 aa).

4 residues coordinate substrate: arginine 87, arginine 97, arginine 121, and aspartate 211. Mg(2+)-binding residues include aspartate 211, aspartate 235, and aspartate 239. 271 to 283 (GSAPDIAGQGIAD) serves as a coordination point for NAD(+).

This sequence belongs to the isocitrate and isopropylmalate dehydrogenases family. LeuB type 2 subfamily. Homodimer. Requires Mg(2+) as cofactor. Mn(2+) is required as a cofactor.

The protein resides in the cytoplasm. It carries out the reaction (2R,3S)-3-isopropylmalate + NAD(+) = 4-methyl-2-oxopentanoate + CO2 + NADH. It participates in amino-acid biosynthesis; L-leucine biosynthesis; L-leucine from 3-methyl-2-oxobutanoate: step 3/4. Functionally, catalyzes the oxidation of 3-carboxy-2-hydroxy-4-methylpentanoate (3-isopropylmalate) to 3-carboxy-4-methyl-2-oxopentanoate. The product decarboxylates to 4-methyl-2 oxopentanoate. This is 3-isopropylmalate dehydrogenase from Mycolicibacterium vanbaalenii (strain DSM 7251 / JCM 13017 / BCRC 16820 / KCTC 9966 / NRRL B-24157 / PYR-1) (Mycobacterium vanbaalenii).